Reading from the N-terminus, the 336-residue chain is Mitochondrial amidoxime reducing component 2 (336 aa).

A mitochondrion-targeting transit peptide spans 1–35; sequence MGAAGSSALARLGLPALPGPRWLGVAALGLAAVAL. Residues K138, K144, K173, K187, K287, and K294 each participate in a glycyl lysine isopeptide (Lys-Gly) (interchain with G-Cter in ubiquitin) cross-link. An MOSC domain is found at 188 to 334; sequence ARASNEIFPS…LKVGDPVYQM (147 aa).

Component of a complex composed of cytochrome b5, NADH-cytochrome b5 reductase (CYB5R3) and MTARC2. Mo-molybdopterin serves as cofactor. Ubiquitinated by PRKN during mitophagy, leading to its degradation and enhancement of mitophagy. Deubiquitinated by USP30.

Its subcellular location is the mitochondrion outer membrane. It localises to the peroxisome. It catalyses the reaction N(omega)-hydroxy-L-arginine + 2 Fe(II)-[cytochrome b5] + 2 H(+) = L-arginine + 2 Fe(III)-[cytochrome b5] + H2O. Catalyzes the reduction of N-oxygenated molecules, acting as a counterpart of cytochrome P450 and flavin-containing monooxygenases in metabolic cycles. As a component of prodrug-converting system, reduces a multitude of N-hydroxylated prodrugs particularly amidoximes, leading to increased drug bioavailability. May be involved in mitochondrial N(omega)-hydroxy-L-arginine (NOHA) reduction, regulating endogenous nitric oxide levels and biosynthesis. Postulated to cleave the N-OH bond of N-hydroxylated substrates in concert with electron transfer from NADH to cytochrome b5 reductase then to cytochrome b5, the ultimate electron donor that primes the active site for substrate reduction. This is Mitochondrial amidoxime reducing component 2 (MTARC2) from Bos taurus (Bovine).